Here is a 734-residue protein sequence, read N- to C-terminus: Photosystem I P700 chlorophyll a apoprotein A2 (734 aa).

Helical transmembrane passes span 46–69 (IFASHFGQLAIIFLWTSGNLFHVA), 135–158 (LYGGSIFLLFVSALFLIAGWLHLQ), 175–199 (LNHHLSGLFGVSSLAWTGHLVHVAI), 273–291 (MAHHHLAIAVIFIIAGHMY), 330–353 (LHFQLGLALASLGVITSLVAQHMY), 369–395 (AALYTHHQYIAGFIMTGAFAHGAIFFI), 417–439 (AIISHLSWASLFLGFHTLGLYVH), and 517–535 (FLVHHAIALGLHTTTLILV). 2 residues coordinate [4Fe-4S] cluster: Cys-559 and Cys-568. The next 2 helical transmembrane spans lie at 575–596 (AFYLAVFWMLNTIGWVTFYWHW) and 643–665 (LSVWAWMFLFGHLVWATGFMFLI). Chlorophyll a-binding residues include His-654, Met-662, and Tyr-670. Trp-671 serves as a coordination point for phylloquinone. The chain crosses the membrane as a helical span at residues 707-727 (LVGLAHFSVGYIFTYAAFLIA).

The protein belongs to the PsaA/PsaB family. The PsaA/B heterodimer binds the P700 chlorophyll special pair and subsequent electron acceptors. PSI consists of a core antenna complex that captures photons, and an electron transfer chain that converts photonic excitation into a charge separation. The eukaryotic PSI reaction center is composed of at least 11 subunits. It depends on P700 is a chlorophyll a/chlorophyll a' dimer, A0 is one or more chlorophyll a, A1 is one or both phylloquinones and FX is a shared 4Fe-4S iron-sulfur center. as a cofactor.

It is found in the plastid. The protein localises to the chloroplast thylakoid membrane. The enzyme catalyses reduced [plastocyanin] + hnu + oxidized [2Fe-2S]-[ferredoxin] = oxidized [plastocyanin] + reduced [2Fe-2S]-[ferredoxin]. Its function is as follows. PsaA and PsaB bind P700, the primary electron donor of photosystem I (PSI), as well as the electron acceptors A0, A1 and FX. PSI is a plastocyanin-ferredoxin oxidoreductase, converting photonic excitation into a charge separation, which transfers an electron from the donor P700 chlorophyll pair to the spectroscopically characterized acceptors A0, A1, FX, FA and FB in turn. Oxidized P700 is reduced on the lumenal side of the thylakoid membrane by plastocyanin. This Physcomitrium patens (Spreading-leaved earth moss) protein is Photosystem I P700 chlorophyll a apoprotein A2.